A 336-amino-acid chain; its full sequence is MAKVYYEKDVTVNVLKEKKVAIIGYGSQGHAHAQNLRDNGFDVVVGLRKGKSWDKAKEDGFSVYTVAEAAKQADVVMILLPDELQPEVYEAEIAPNLQAGNSLVFAHGFNVHFDQVKPPANVDVFLVAPKGPGHLVRRTFSEGGAVPALFAVYQDATGVATEKALSYADGIGATRAGVLETTFKEETETDLFGEQAVLCGGVTALVKAGFETLVDAGYQPELAYFECLHELKLIVDLMYEGGLENMRYSVSDTAQWGDFVSGPRVVTEDTKKAMGTVLAEIQDGTFARGWIAEHKAGRPNFHATNEKENEHEIEVVGRKLREMMPFVQPRVKVGMK.

The region spanning 2-181 (AKVYYEKDVT…GATRAGVLET (180 aa)) is the KARI N-terminal Rossmann domain. NADP(+)-binding positions include 25–28 (YGSQ), Arg48, Ser52, and 82–85 (DELQ). The active site involves His107. Gly133 lines the NADP(+) pocket. Positions 182–327 (TFKEETETDL…RKLREMMPFV (146 aa)) constitute a KARI C-terminal knotted domain. Residues Asp190, Glu194, Glu226, and Glu230 each contribute to the Mg(2+) site. Ser251 is a substrate binding site.

The protein belongs to the ketol-acid reductoisomerase family. It depends on Mg(2+) as a cofactor.

It catalyses the reaction (2R)-2,3-dihydroxy-3-methylbutanoate + NADP(+) = (2S)-2-acetolactate + NADPH + H(+). The catalysed reaction is (2R,3R)-2,3-dihydroxy-3-methylpentanoate + NADP(+) = (S)-2-ethyl-2-hydroxy-3-oxobutanoate + NADPH + H(+). It participates in amino-acid biosynthesis; L-isoleucine biosynthesis; L-isoleucine from 2-oxobutanoate: step 2/4. Its pathway is amino-acid biosynthesis; L-valine biosynthesis; L-valine from pyruvate: step 2/4. In terms of biological role, involved in the biosynthesis of branched-chain amino acids (BCAA). Catalyzes an alkyl-migration followed by a ketol-acid reduction of (S)-2-acetolactate (S2AL) to yield (R)-2,3-dihydroxy-isovalerate. In the isomerase reaction, S2AL is rearranged via a Mg-dependent methyl migration to produce 3-hydroxy-3-methyl-2-ketobutyrate (HMKB). In the reductase reaction, this 2-ketoacid undergoes a metal-dependent reduction by NADPH to yield (R)-2,3-dihydroxy-isovalerate. The polypeptide is Ketol-acid reductoisomerase (NADP(+)) 1 (Bacillus cereus (strain ATCC 10987 / NRS 248)).